Reading from the N-terminus, the 118-residue chain is Large ribosomal subunit protein bL20 (118 aa).

Belongs to the bacterial ribosomal protein bL20 family.

In terms of biological role, binds directly to 23S ribosomal RNA and is necessary for the in vitro assembly process of the 50S ribosomal subunit. It is not involved in the protein synthesizing functions of that subunit. In Kosmotoga olearia (strain ATCC BAA-1733 / DSM 21960 / TBF 19.5.1), this protein is Large ribosomal subunit protein bL20.